The sequence spans 637 residues: Cell division cycle-related protein res1/sct1 (637 aa).

The HTH APSES-type domain occupies 6 to 112 (IHKITYSGVE…YSGSAFMPMS (107 aa)). The segment at residues 37 to 58 (ATQILKIAELDKPRRTRILEKF) is a DNA-binding region (H-T-H motif). A disordered region spans residues 114–137 (FTPQSNRKPTEAYRRNSPVKKSFS). 2 ANK repeats span residues 236–265 (DGHT…NVVA) and 357–386 (HGDT…SSSI).

In terms of assembly, DSC1 contains cdc10 and sct1/res1.

Functionally, acts as a positive regulator of the mitotic cell cycle and as a negative regulator of sexual differentiation. May be involved in the transcriptional regulation of the cdc22 and cdt1 genes. Is an integral component of the DSC1-like complex. This chain is Cell division cycle-related protein res1/sct1 (res1), found in Schizosaccharomyces pombe (strain 972 / ATCC 24843) (Fission yeast).